The following is a 261-amino-acid chain: Triosephosphate isomerase (261 aa).

10–12 (NWK) provides a ligand contact to substrate. Catalysis depends on histidine 100, which acts as the Electrophile. Glutamate 172 (proton acceptor) is an active-site residue. Substrate is bound by residues glycine 178, serine 218, and 239 to 240 (GG).

It belongs to the triosephosphate isomerase family. In terms of assembly, homodimer.

It localises to the cytoplasm. It catalyses the reaction D-glyceraldehyde 3-phosphate = dihydroxyacetone phosphate. It participates in carbohydrate biosynthesis; gluconeogenesis. Its pathway is carbohydrate degradation; glycolysis; D-glyceraldehyde 3-phosphate from glycerone phosphate: step 1/1. Functionally, involved in the gluconeogenesis. Catalyzes stereospecifically the conversion of dihydroxyacetone phosphate (DHAP) to D-glyceraldehyde-3-phosphate (G3P). The sequence is that of Triosephosphate isomerase from Mycobacterium tuberculosis (strain CDC 1551 / Oshkosh).